The following is an 894-amino-acid chain: Translation initiation factor IF-2 (894 aa).

Positions 47–305 are disordered; it reads AHLNRENGSG…GSALQQSFQK (259 aa). The segment covering 68 to 82 has biased composition (polar residues); that stretch reads STLNIPGTGGKSKSV. Composition is skewed to basic and acidic residues over residues 93 to 159 and 166 to 219; these read VKRD…KDKV and DMTK…KWTD. The segment covering 254–269 has biased composition (basic residues); sequence GRSRNAKAARPAKKGN. The span at 270–283 shows a compositional bias: basic and acidic residues; the sequence is KHSESKADREEARA. Positions 393-562 constitute a tr-type G domain; it reads PRAPVVTIMG…LLQAEVLELK (170 aa). The interval 402-409 is G1; that stretch reads GHVDHGKT. Position 402-409 (402-409) interacts with GTP; that stretch reads GHVDHGKT. A G2 region spans residues 427 to 431; that stretch reads GITQH. Residues 448–451 form a G3 region; it reads DTPG. Residues 448–452 and 502–505 contribute to the GTP site; these read DTPGH and NKID. Residues 502-505 are G4; the sequence is NKID. The segment at 538–540 is G5; that stretch reads SAK.

This sequence belongs to the TRAFAC class translation factor GTPase superfamily. Classic translation factor GTPase family. IF-2 subfamily.

Its subcellular location is the cytoplasm. One of the essential components for the initiation of protein synthesis. Protects formylmethionyl-tRNA from spontaneous hydrolysis and promotes its binding to the 30S ribosomal subunits. Also involved in the hydrolysis of GTP during the formation of the 70S ribosomal complex. The polypeptide is Translation initiation factor IF-2 (Citrobacter koseri (strain ATCC BAA-895 / CDC 4225-83 / SGSC4696)).